The following is a 950-amino-acid chain: Protocadherin alpha-3 (950 aa).

An N-terminal signal peptide occupies residues 1 to 29; it reads MLFSWREDPGAQCLLLSLLLLAASEVGSG. Cadherin domains lie at 30–133, 134–242, 243–350, 351–455, 456–565, and 581–678; these read QLHY…APVF, PMAV…APAF, ERTI…VPEL, VIQS…APAF, SQSE…APAL, and VPRS…APKA. Residues 30-697 are Extracellular-facing; sequence QLHYSVSEEA…GPEAALVDVN (668 aa). 2 N-linked (GlcNAc...) asparagine glycosylation sites follow: N257 and N265. Residue N548 is glycosylated (N-linked (GlcNAc...) asparagine). Residues 698–718 traverse the membrane as a helical segment; sequence VYLIVAICAVSSLLVLTLLLY. Over 719-950 the chain is Cytoplasmic; the sequence is TALRCSAPPT…GNSTTDNSDQ (232 aa). 2 PXXP repeats span residues 734-737 and 774-777; these read PGKP and PSLP. Residues 734 to 894 are 6 X 4 AA repeats of P-X-X-P; sequence PGKPTLVCSS…PDKFIIPGSP (161 aa). 3 disordered regions span residues 777–806, 831–856, and 869–950; these read PPCPISRDREEKQDVDVDLSAKPRQPNPDW, GPGGPDQQWPTVSSATPEPEAGEVSP, and FKYG…NSDQ. The span at 782 to 797 shows a compositional bias: basic and acidic residues; sequence SRDREEKQDVDVDLSA. 4 PXXP repeats span residues 799 to 802, 832 to 835, 873 to 876, and 891 to 894; these read PRQP, PGGP, PGNP, and PGSP. The span at 909 to 923 shows a compositional bias: basic and acidic residues; sequence DKSDFITFGKKEETK.

The protein resides in the cell membrane. Potential calcium-dependent cell-adhesion protein. May be involved in the establishment and maintenance of specific neuronal connections in the brain. This Homo sapiens (Human) protein is Protocadherin alpha-3 (PCDHA3).